The sequence spans 141 residues: HTH-type transcriptional repressor NsrR (141 aa).

One can recognise an HTH rrf2-type domain in the interval 2 to 129 (QLTSFTDYGL…DNYTLADLVE (128 aa)). Residues 28–51 (ISQVTEVYGVSRNHMVKIINQLSR) constitute a DNA-binding region (H-T-H motif). [2Fe-2S] cluster-binding residues include Cys-91, Cys-96, and Cys-102.

[2Fe-2S] cluster serves as cofactor.

Functionally, nitric oxide-sensitive repressor of genes involved in protecting the cell against nitrosative stress. May require iron for activity. This chain is HTH-type transcriptional repressor NsrR, found in Enterobacter sp. (strain 638).